Consider the following 293-residue polypeptide: Bifunctional protein FolD 1 (293 aa).

NADP(+) contacts are provided by residues 174 to 176 (GRS) and T240.

The protein belongs to the tetrahydrofolate dehydrogenase/cyclohydrolase family. In terms of assembly, homodimer.

It carries out the reaction (6R)-5,10-methylene-5,6,7,8-tetrahydrofolate + NADP(+) = (6R)-5,10-methenyltetrahydrofolate + NADPH. The enzyme catalyses (6R)-5,10-methenyltetrahydrofolate + H2O = (6R)-10-formyltetrahydrofolate + H(+). It functions in the pathway one-carbon metabolism; tetrahydrofolate interconversion. Catalyzes the oxidation of 5,10-methylenetetrahydrofolate to 5,10-methenyltetrahydrofolate and then the hydrolysis of 5,10-methenyltetrahydrofolate to 10-formyltetrahydrofolate. This Saccharopolyspora erythraea (strain ATCC 11635 / DSM 40517 / JCM 4748 / NBRC 13426 / NCIMB 8594 / NRRL 2338) protein is Bifunctional protein FolD 1.